Reading from the N-terminus, the 154-residue chain is MKVMEGNLVGTGLKIAIVISRFNEFITSKLLSGAMDGLKRHGVNENDVTVAWVPGAFEIPLIAKKLAESRQYDAVIALGAVIRGATSHYDYVCNEVAKGVSHAALSTGTPVIFGVLTTDTIEQAIERAGTKAGNKGWEAAVSAIEMANLLRTFA.

5-amino-6-(D-ribitylamino)uracil-binding positions include Phe-22, 56–58 (AFE), and 80–82 (AVI). 85–86 (AT) is a (2S)-2-hydroxy-3-oxobutyl phosphate binding site. The Proton donor role is filled by His-88. Phe-113 contributes to the 5-amino-6-(D-ribitylamino)uracil binding site. Arg-127 contributes to the (2S)-2-hydroxy-3-oxobutyl phosphate binding site.

It belongs to the DMRL synthase family. As to quaternary structure, forms an icosahedral capsid composed of 60 subunits, arranged as a dodecamer of pentamers.

It carries out the reaction (2S)-2-hydroxy-3-oxobutyl phosphate + 5-amino-6-(D-ribitylamino)uracil = 6,7-dimethyl-8-(1-D-ribityl)lumazine + phosphate + 2 H2O + H(+). The protein operates within cofactor biosynthesis; riboflavin biosynthesis; riboflavin from 2-hydroxy-3-oxobutyl phosphate and 5-amino-6-(D-ribitylamino)uracil: step 1/2. Catalyzes the formation of 6,7-dimethyl-8-ribityllumazine by condensation of 5-amino-6-(D-ribitylamino)uracil with 3,4-dihydroxy-2-butanone 4-phosphate. This is the penultimate step in the biosynthesis of riboflavin. This Geobacillus sp. (strain WCH70) protein is 6,7-dimethyl-8-ribityllumazine synthase.